Reading from the N-terminus, the 361-residue chain is DNA replication and repair protein RecF (361 aa).

30 to 37 contributes to the ATP binding site; the sequence is GPNGSGKT.

Belongs to the RecF family.

The protein localises to the cytoplasm. In terms of biological role, the RecF protein is involved in DNA metabolism; it is required for DNA replication and normal SOS inducibility. RecF binds preferentially to single-stranded, linear DNA. It also seems to bind ATP. In Erwinia tasmaniensis (strain DSM 17950 / CFBP 7177 / CIP 109463 / NCPPB 4357 / Et1/99), this protein is DNA replication and repair protein RecF.